We begin with the raw amino-acid sequence, 320 residues long: MGTTNLTLDSESICDPNYDILFENAIYFVTACYLSVGLFCHISLLKIILISDRKYFKDNSFFVLFRADLFASTTLLLYDIFFGRIFMYIPQLCPFVSTFFSTPTIFLKVLYVAQNHARFVKSLSQIFMVLNRMSCVLMPATYNQFWNKITPIASFIMLILPFAGLWNIMISQVIASSVRGGFGVDYIKAVKWASLSLFQSICILTALGFTIVCTSVTFYKLACLSDRVRSIERSLCFTSISISCTFLLVAGTQLTFATCASCKTDAMYILQFLAFDTFNVGSAIIMFLTNRHLRSSMFSSQKKRAVTVVTVGQISTNTYN.

Transmembrane regions (helical) follow at residues 25–45 (AIYF…ISLL), 80–100 (IFFG…STFF), 155–175 (FIML…QVIA), 192–212 (WASL…FTIV), 237–257 (FTSI…LTFA), and 268–288 (YILQ…IMFL).

Belongs to the nematode receptor-like protein srg family.

It localises to the membrane. The sequence is that of Serpentine receptor class gamma-17 (srg-17) from Caenorhabditis elegans.